Reading from the N-terminus, the 318-residue chain is Protoheme IX farnesyltransferase (318 aa).

The next 9 helical transmembrane spans lie at 33 to 53, 54 to 74, 102 to 122, 125 to 145, 154 to 174, 181 to 201, 225 to 245, 246 to 266, and 288 to 308; these read VMSL…VSVH, PFIG…SGAL, GEAL…LALA, VLAG…YTMW, IVIG…AATG, WLMF…LALF, VHIL…AFSN, IGGP…LLGA, and FFKL…AEAL.

The protein belongs to the UbiA prenyltransferase family. Protoheme IX farnesyltransferase subfamily. Interacts with CtaA.

It localises to the cell inner membrane. It catalyses the reaction heme b + (2E,6E)-farnesyl diphosphate + H2O = Fe(II)-heme o + diphosphate. It participates in porphyrin-containing compound metabolism; heme O biosynthesis; heme O from protoheme: step 1/1. Functionally, converts heme B (protoheme IX) to heme O by substitution of the vinyl group on carbon 2 of heme B porphyrin ring with a hydroxyethyl farnesyl side group. The sequence is that of Protoheme IX farnesyltransferase from Ruegeria pomeroyi (strain ATCC 700808 / DSM 15171 / DSS-3) (Silicibacter pomeroyi).